Here is a 433-residue protein sequence, read N- to C-terminus: FAD-dependent monooxygenase notI' (433 aa).

FAD contacts are provided by E45 and R117. R195 is an active-site residue. 2 residues coordinate FAD: D314 and A327.

It belongs to the paxM FAD-dependent monooxygenase family. The cofactor is FAD.

It participates in alkaloid biosynthesis. In terms of biological role, FAD-dependent monooxygenase; part of the gene cluster that mediates the biosynthesis of notoamide, a fungal indole alkaloid that belongs to a family of natural products containing a characteristic bicyclo[2.2.2]diazaoctane core. The first step of notoamide biosynthesis involves coupling of L-proline and L-tryptophan by the bimodular NRPS notE', to produce cyclo-L-tryptophan-L-proline called brevianamide F. The reverse prenyltransferase notF' then acts as a deoxybrevianamide E synthase and converts brevianamide F to deoxybrevianamide E via reverse prenylation at C-2 of the indole ring leading to the bicyclo[2.2.2]diazaoctane core. Deoxybrevianamide E is further hydroxylated at C-6 of the indole ring, likely catalyzed by the cytochrome P450 monooxygenase notG', to yield 6-hydroxy-deoxybrevianamide E. 6-hydroxy-deoxybrevianamide E is a specific substrate of the prenyltransferase notC' for normal prenylation at C-7 to produce 6-hydroxy-7-prenyl-deoxybrevianamide, also called notoamide S. As the proposed pivotal branching point in notoamide biosynthesis, notoamide S can be diverted to notoamide E through an oxidative pyran ring closure putatively catalyzed by either notH' cytochrome P450 monooxygenase or the notD' FAD-linked oxidoreductase. This step would be followed by an indole 2,3-epoxidation-initiated pinacol-like rearrangement catalyzed by the notB' FAD-dependent monooxygenase leading to the formation of notoamide C and notoamide D. On the other hand notoamide S is converted to notoamide T by notH' (or notD'), a bifunctional oxidase that also functions as the intramolecular Diels-Alderase responsible for generation of (-)-notoamide T. To generate antipodal (+)-notoaminide T, notH (or notD) in Aspergillus strain MF297-2 is expected to catalyze a Diels-Alder reaction leading to the opposite stereochemistry. The remaining oxidoreductase notD' (or notH') likely catalyzes the oxidative pyran ring formation to yield (-)-stephacidin A. The FAD-dependent monooxygenase notI' is highly similar to notB' and is predicted to catalyze a similar conversion from (-)-stephacidin A to (+)-notoamide B via the 2,3-epoxidation of (-)-stephacidin A followed by a pinacol-type rearrangement. Finally, it remains unclear which enzyme could be responsible for the final hydroxylation steps leading to notoamide A and sclerotiamide. In Aspergillus versicolor, this protein is FAD-dependent monooxygenase notI'.